The primary structure comprises 1204 residues: DNA-directed RNA polymerase subunit beta' (1204 aa).

Residues cysteine 60, cysteine 62, cysteine 75, and cysteine 78 each coordinate Zn(2+). The Mg(2+) site is built by aspartate 449, aspartate 451, and aspartate 453. Zn(2+)-binding residues include cysteine 819, cysteine 893, cysteine 900, and cysteine 903.

This sequence belongs to the RNA polymerase beta' chain family. The RNAP catalytic core consists of 2 alpha, 1 beta, 1 beta' and 1 omega subunit. When a sigma factor is associated with the core the holoenzyme is formed, which can initiate transcription. Requires Mg(2+) as cofactor. It depends on Zn(2+) as a cofactor.

The catalysed reaction is RNA(n) + a ribonucleoside 5'-triphosphate = RNA(n+1) + diphosphate. Its function is as follows. DNA-dependent RNA polymerase catalyzes the transcription of DNA into RNA using the four ribonucleoside triphosphates as substrates. In Bacillus cytotoxicus (strain DSM 22905 / CIP 110041 / 391-98 / NVH 391-98), this protein is DNA-directed RNA polymerase subunit beta'.